A 436-amino-acid polypeptide reads, in one-letter code: UPF0597 protein YhaM (436 aa).

This sequence belongs to the UPF0597 family.

This is UPF0597 protein YhaM from Shigella boydii serotype 18 (strain CDC 3083-94 / BS512).